We begin with the raw amino-acid sequence, 85 residues long: Small ribosomal subunit protein bS20 (85 aa).

Residues 1-22 are disordered; it reads MANIKSAIKRAKLSEERRAHNA.

Belongs to the bacterial ribosomal protein bS20 family.

Functionally, binds directly to 16S ribosomal RNA. This is Small ribosomal subunit protein bS20 from Bacillus cytotoxicus (strain DSM 22905 / CIP 110041 / 391-98 / NVH 391-98).